The following is a 652-amino-acid chain: Acetyl-coenzyme A synthetase (652 aa).

CoA is bound by residues 191–194 (RAGR), T311, and N335. Residues 387 to 389 (GEP), 411 to 416 (DTWWQT), D500, and R515 contribute to the ATP site. S523 provides a ligand contact to CoA. An ATP-binding site is contributed by R526. Mg(2+)-binding residues include V537, H539, and I542. R584 contacts CoA. K609 carries the N6-acetyllysine modification.

Belongs to the ATP-dependent AMP-binding enzyme family. Mg(2+) serves as cofactor. Post-translationally, acetylated. Deacetylation by the SIR2-homolog deacetylase activates the enzyme.

The catalysed reaction is acetate + ATP + CoA = acetyl-CoA + AMP + diphosphate. Catalyzes the conversion of acetate into acetyl-CoA (AcCoA), an essential intermediate at the junction of anabolic and catabolic pathways. Acs undergoes a two-step reaction. In the first half reaction, Acs combines acetate with ATP to form acetyl-adenylate (AcAMP) intermediate. In the second half reaction, it can then transfer the acetyl group from AcAMP to the sulfhydryl group of CoA, forming the product AcCoA. Its function is as follows. Enables the cell to use acetate during aerobic growth to generate energy via the TCA cycle, and biosynthetic compounds via the glyoxylate shunt. Acetylates CheY, the response regulator involved in flagellar movement and chemotaxis. This is Acetyl-coenzyme A synthetase from Yersinia pestis.